The primary structure comprises 510 residues: GMP synthase [glutamine-hydrolyzing] (510 aa).

The Glutamine amidotransferase type-1 domain maps to Leu-5–Asp-195. Residue Cys-82 is the Nucleophile of the active site. Active-site residues include His-169 and Glu-171. The GMPS ATP-PPase domain occupies Trp-196–Arg-385. Residue Ser-223–Ser-229 coordinates ATP.

In terms of assembly, homodimer.

The enzyme catalyses XMP + L-glutamine + ATP + H2O = GMP + L-glutamate + AMP + diphosphate + 2 H(+). The protein operates within purine metabolism; GMP biosynthesis; GMP from XMP (L-Gln route): step 1/1. Functionally, catalyzes the synthesis of GMP from XMP. This Clostridium kluyveri (strain NBRC 12016) protein is GMP synthase [glutamine-hydrolyzing].